Reading from the N-terminus, the 88-residue chain is Small ribosomal subunit protein uS15 (88 aa).

The protein belongs to the universal ribosomal protein uS15 family. As to quaternary structure, part of the 30S ribosomal subunit. Forms a bridge to the 50S subunit in the 70S ribosome, contacting the 23S rRNA.

Its function is as follows. One of the primary rRNA binding proteins, it binds directly to 16S rRNA where it helps nucleate assembly of the platform of the 30S subunit by binding and bridging several RNA helices of the 16S rRNA. Forms an intersubunit bridge (bridge B4) with the 23S rRNA of the 50S subunit in the ribosome. The protein is Small ribosomal subunit protein uS15 of Flavobacterium psychrophilum (strain ATCC 49511 / DSM 21280 / CIP 103535 / JIP02/86).